Here is a 185-residue protein sequence, read N- to C-terminus: Ribosome-recycling factor (185 aa).

It belongs to the RRF family.

Its subcellular location is the cytoplasm. Its function is as follows. Responsible for the release of ribosomes from messenger RNA at the termination of protein biosynthesis. May increase the efficiency of translation by recycling ribosomes from one round of translation to another. This is Ribosome-recycling factor from Alteromonas mediterranea (strain DSM 17117 / CIP 110805 / LMG 28347 / Deep ecotype).